We begin with the raw amino-acid sequence, 363 residues long: NAD(P)H-quinone oxidoreductase subunit 1, chloroplastic (363 aa).

The next 8 helical transmembrane spans lie at 30 to 50 (LVPI…IVWL), 98 to 118 (FSIG…VIPF), 127 to 147 (LSIG…GLLM), 165 to 185 (AAQS…ISLL), 203 to 223 (FWGW…ISSL), 248 to 268 (YSGI…LVSS), 300 to 320 (VFGT…FLFI), and 336 to 356 (LLNL…LLTT).

This sequence belongs to the complex I subunit 1 family. In terms of assembly, NDH is composed of at least 16 different subunits, 5 of which are encoded in the nucleus.

The protein localises to the plastid. Its subcellular location is the chloroplast thylakoid membrane. The enzyme catalyses a plastoquinone + NADH + (n+1) H(+)(in) = a plastoquinol + NAD(+) + n H(+)(out). It carries out the reaction a plastoquinone + NADPH + (n+1) H(+)(in) = a plastoquinol + NADP(+) + n H(+)(out). In terms of biological role, NDH shuttles electrons from NAD(P)H:plastoquinone, via FMN and iron-sulfur (Fe-S) centers, to quinones in the photosynthetic chain and possibly in a chloroplast respiratory chain. The immediate electron acceptor for the enzyme in this species is believed to be plastoquinone. Couples the redox reaction to proton translocation, and thus conserves the redox energy in a proton gradient. The polypeptide is NAD(P)H-quinone oxidoreductase subunit 1, chloroplastic (Solanum lycopersicum (Tomato)).